The following is a 138-amino-acid chain: FUN14 domain-containing protein fndc-1 (138 aa).

The next 2 helical transmembrane spans lie at 37-56 (PMVQLGVGAGFGTVTGYFVT) and 61-78 (LVAATVGISFLLAQFAIH). Residues Asn-85 and Asn-111 are each glycosylated (N-linked (GlcNAc...) asparagine).

The protein belongs to the FUN14 family. In terms of tissue distribution, broadly expressed in somatic tissues. Expressed in the hermaphrodite spermatheca and male gonad. Expressed in spermatids, but not expressed in oocytes.

It localises to the mitochondrion outer membrane. Mitophagy receptor which plays a role in paternal mitochondria degradation in embryos after the two-cell stage. The sequence is that of FUN14 domain-containing protein fndc-1 from Caenorhabditis elegans.